Here is a 661-residue protein sequence, read N- to C-terminus: UvrABC system protein B (661 aa).

One can recognise a Helicase ATP-binding domain in the interval 31-186 (DNIEGGEKAQ…LLNALVDIQF (156 aa)). Position 44 to 51 (44 to 51 (GATGTGKT)) interacts with ATP. The Beta-hairpin motif lies at 97-120 (YYDYYQPEAYVPSSDTYIEKDSSV). The Helicase C-terminal domain maps to 435–601 (QMDDLLGEIN…TIKKEIRDLI (167 aa)). The UVR domain maps to 626–661 (KAMIKKLEGQMQEAAEVLDFELAAQIRDMVIELKNM).

This sequence belongs to the UvrB family. In terms of assembly, forms a heterotetramer with UvrA during the search for lesions. Interacts with UvrC in an incision complex.

Its subcellular location is the cytoplasm. Functionally, the UvrABC repair system catalyzes the recognition and processing of DNA lesions. A damage recognition complex composed of 2 UvrA and 2 UvrB subunits scans DNA for abnormalities. Upon binding of the UvrA(2)B(2) complex to a putative damaged site, the DNA wraps around one UvrB monomer. DNA wrap is dependent on ATP binding by UvrB and probably causes local melting of the DNA helix, facilitating insertion of UvrB beta-hairpin between the DNA strands. Then UvrB probes one DNA strand for the presence of a lesion. If a lesion is found the UvrA subunits dissociate and the UvrB-DNA preincision complex is formed. This complex is subsequently bound by UvrC and the second UvrB is released. If no lesion is found, the DNA wraps around the other UvrB subunit that will check the other stand for damage. The protein is UvrABC system protein B of Streptococcus suis (strain 98HAH33).